Reading from the N-terminus, the 830-residue chain is Protein translocase subunit SecA (830 aa).

Residues Gln-86, 104–108 (GEGKT), and Asp-491 contribute to the ATP site. Cys-813, Cys-815, Cys-824, and Cys-825 together coordinate Zn(2+).

It belongs to the SecA family. As to quaternary structure, monomer and homodimer. Part of the essential Sec protein translocation apparatus which comprises SecA, SecYEG and auxiliary proteins SecDF. Other proteins may also be involved. The cofactor is Zn(2+).

It localises to the cell membrane. The protein resides in the cytoplasm. The enzyme catalyses ATP + H2O + cellular proteinSide 1 = ADP + phosphate + cellular proteinSide 2.. In terms of biological role, part of the Sec protein translocase complex. Interacts with the SecYEG preprotein conducting channel. Has a central role in coupling the hydrolysis of ATP to the transfer of proteins into and across the cell membrane, serving as an ATP-driven molecular motor driving the stepwise translocation of polypeptide chains across the membrane. This Syntrophomonas wolfei subsp. wolfei (strain DSM 2245B / Goettingen) protein is Protein translocase subunit SecA.